A 396-amino-acid chain; its full sequence is Elongation factor Tu (396 aa).

Residues 10–205 (KPHVNIGTIG…AVDESIPDPV (196 aa)) form the tr-type G domain. The interval 19–26 (GHVDHGKT) is G1. Position 19-26 (19-26 (GHVDHGKT)) interacts with GTP. Thr26 is a Mg(2+) binding site. A G2 region spans residues 62 to 66 (GITIN). The interval 83–86 (DAPG) is G3. GTP-binding positions include 83-87 (DAPGH) and 138-141 (NKAD). Residues 138-141 (NKAD) form a G4 region. Positions 175–177 (SAL) are G5.

Belongs to the TRAFAC class translation factor GTPase superfamily. Classic translation factor GTPase family. EF-Tu/EF-1A subfamily. As to quaternary structure, monomer.

It localises to the cytoplasm. The enzyme catalyses GTP + H2O = GDP + phosphate + H(+). In terms of biological role, GTP hydrolase that promotes the GTP-dependent binding of aminoacyl-tRNA to the A-site of ribosomes during protein biosynthesis. This is Elongation factor Tu from Mycobacterium bovis (strain ATCC BAA-935 / AF2122/97).